Consider the following 229-residue polypeptide: Cytidylate kinase (229 aa).

G12–T20 provides a ligand contact to ATP.

It belongs to the cytidylate kinase family. Type 1 subfamily.

Its subcellular location is the cytoplasm. The catalysed reaction is CMP + ATP = CDP + ADP. It catalyses the reaction dCMP + ATP = dCDP + ADP. The sequence is that of Cytidylate kinase from Mesomycoplasma hyopneumoniae (strain 7448) (Mycoplasma hyopneumoniae).